Here is a 30-residue protein sequence, read N- to C-terminus: Ornithine carbamoyltransferase (30 aa).

This sequence belongs to the aspartate/ornithine carbamoyltransferase superfamily. OTCase family.

The protein resides in the cytoplasm. It carries out the reaction carbamoyl phosphate + L-ornithine = L-citrulline + phosphate + H(+). It participates in amino-acid biosynthesis; L-arginine biosynthesis; L-arginine from L-ornithine and carbamoyl phosphate: step 1/3. Functionally, has vitronectin and fibronectin-binding activity. The sequence is that of Ornithine carbamoyltransferase (argF) from Staphylococcus epidermidis.